Here is a 285-residue protein sequence, read N- to C-terminus: MKYIGAHVSAAGGLANAPARAAEIGATAFALFTKNQRQWRAAPLTPQVIDDFKIACEKYHFSAAQILPHDSYLINLGHPVSEALEKSRVAFLDEMQRCEQLGLTLLNFHPGSHLMQIAQEDCLARIAESINIALAQTEGVTAVIENTAGQGSNLGFEFEQLAAIIDGVEDKSRVGVCIDTCHAFAAGYDLRTPEACEKTFAGFGKIVGFQYLRGMHLNDAKSAFGSRVDRHHSLGEGNIGHDAFRWIMQDARFDGIPLILETINPDIWAEEIAWLKAQQIAEAVA.

Residues His69, His109, Glu145, Asp179, His182, His216, Asp229, His231, and Glu261 each contribute to the Zn(2+) site.

This sequence belongs to the AP endonuclease 2 family. It depends on Zn(2+) as a cofactor.

The catalysed reaction is Endonucleolytic cleavage to 5'-phosphooligonucleotide end-products.. Its function is as follows. Endonuclease IV plays a role in DNA repair. It cleaves phosphodiester bonds at apurinic or apyrimidinic (AP) sites, generating a 3'-hydroxyl group and a 5'-terminal sugar phosphate. The polypeptide is Probable endonuclease 4 (Salmonella schwarzengrund (strain CVM19633)).